Here is a 142-residue protein sequence, read N- to C-terminus: Hemoglobin subunit alpha-1 (142 aa).

A Globin domain is found at 2 to 142 (KLSADDKHNV…VGYVLASKYR (141 aa)). Histidine 59 provides a ligand contact to O2. Histidine 88 contacts heme b.

This sequence belongs to the globin family. Major hemoglobin is a heterotetramer of two alpha-1 chains and two beta-1 chains. In terms of tissue distribution, red blood cells.

Functionally, involved in oxygen transport from the lung to the various peripheral tissues. The sequence is that of Hemoglobin subunit alpha-1 from Triturus cristatus (Great crested newt).